The chain runs to 465 residues: E3 ubiquitin-protein ligase TRIM38 (465 aa).

The RING-type zinc finger occupies 16–63 (CSICLSLMTNPVSINCGHSYCHLCITDFFKNPSQKQLRQETFCCPQCR). S70 carries the post-translational modification Phosphoserine. Residues 88–129 (DQEMSCEEHGEQFHLFCEDEGQLICWRCERAPQHKGHTTALV) form a B box-type zinc finger. Zn(2+)-binding residues include C93, H96, C115, and H121. Residues 274-465 (CNVSKLYFDV…SPLFLPPPGD (192 aa)) enclose the B30.2/SPRY domain.

In terms of assembly, interacts (via B30.2/SPRY domain) with TAB2 and TAB3. As to expression, ubiquitous.

The protein localises to the cytoplasm. The enzyme catalyses S-ubiquitinyl-[E2 ubiquitin-conjugating enzyme]-L-cysteine + [acceptor protein]-L-lysine = [E2 ubiquitin-conjugating enzyme]-L-cysteine + N(6)-ubiquitinyl-[acceptor protein]-L-lysine.. Its pathway is protein modification; protein ubiquitination. It participates in protein modification; protein sumoylation. Functionally, E3 ubiquitin-protein and E3 SUMO-protein ligase that acts as a regulator of innate immunity. Acts as a negative regulator of type I interferon IFN-beta production by catalyzing 'Lys-48'-linked polyubiquitination of AZI2/NAP1, leading to its degradation. Mediates 'Lys-48'-linked polyubiquitination and proteasomal degradation of the critical TLR adapter TICAM1, inhibiting TLR3-mediated type I interferon signaling. Acts as positive regulator of the cGAS-STING pathway by acting as a E3 SUMO-protein ligase: mediates sumoylation of CGAS and STING, preventing their degradation and thereby activating the innate immune response to DNA virus. Also acts as a negative regulator of NF-kappa-B signaling independently of its E3 protein ligase activity by promoting lysosome-dependent degradation of TAB2 and TAB3 adapters. The protein is E3 ubiquitin-protein ligase TRIM38 of Homo sapiens (Human).